Consider the following 419-residue polypeptide: Acyl-[acyl-carrier-protein] hydrolase FATB1, chloroplastic (419 aa).

A chloroplast-targeting transit peptide spans 1-50 (MVAAAATSAFFPVPAPGTSPKPGKSGNWPSSLSPTFKPKSIPNGGFQVKA). Residues 1 to 84 (MVAAAATSAF…DTSSSPPPRA (84 aa)) are disordered. Polar residues predominate over residues 61 to 78 (SAVNLKSGSLNTQEDTSS). Active-site residues include Asn-315, His-317, and Cys-352. Residues 390–419 (SRTEWRPKNAGTNGAISTSTAKTSNGNSVS) are disordered. The segment covering 399–419 (AGTNGAISTSTAKTSNGNSVS) has biased composition (polar residues).

This sequence belongs to the acyl-ACP thioesterase family.

It localises to the plastid. Its subcellular location is the chloroplast. It carries out the reaction octanoyl-[ACP] + H2O = octanoate + holo-[ACP] + H(+). It catalyses the reaction decanoyl-[ACP] + H2O = decanoate + holo-[ACP] + H(+). Its function is as follows. Plays an essential role in chain termination during de novo fatty acid synthesis. Possesses thioesterase activity for short chain acyl-ACPs. Substrate preference is 8:0 &gt; 10:0. In Cuphea viscosissima (Blue waxweed), this protein is Acyl-[acyl-carrier-protein] hydrolase FATB1, chloroplastic.